The chain runs to 101 residues: NAD(P)H-quinone oxidoreductase subunit 4L, chloroplastic (101 aa).

The next 3 membrane-spanning stretches (helical) occupy residues 2–22 (MLEH…YGLI), 32–52 (MCLE…SDFF), and 61–81 (IFSI…SAIV).

This sequence belongs to the complex I subunit 4L family. In terms of assembly, NDH is composed of at least 16 different subunits, 5 of which are encoded in the nucleus.

Its subcellular location is the plastid. The protein resides in the chloroplast thylakoid membrane. The enzyme catalyses a plastoquinone + NADH + (n+1) H(+)(in) = a plastoquinol + NAD(+) + n H(+)(out). The catalysed reaction is a plastoquinone + NADPH + (n+1) H(+)(in) = a plastoquinol + NADP(+) + n H(+)(out). Its function is as follows. NDH shuttles electrons from NAD(P)H:plastoquinone, via FMN and iron-sulfur (Fe-S) centers, to quinones in the photosynthetic chain and possibly in a chloroplast respiratory chain. The immediate electron acceptor for the enzyme in this species is believed to be plastoquinone. Couples the redox reaction to proton translocation, and thus conserves the redox energy in a proton gradient. This is NAD(P)H-quinone oxidoreductase subunit 4L, chloroplastic from Citrus sinensis (Sweet orange).